A 117-amino-acid chain; its full sequence is Large ribosomal subunit protein bL20 (117 aa).

Belongs to the bacterial ribosomal protein bL20 family.

Functionally, binds directly to 23S ribosomal RNA and is necessary for the in vitro assembly process of the 50S ribosomal subunit. It is not involved in the protein synthesizing functions of that subunit. This Roseiflexus sp. (strain RS-1) protein is Large ribosomal subunit protein bL20.